The sequence spans 215 residues: Mediator of RNA polymerase II transcription subunit 18 (215 aa).

It belongs to the Mediator complex subunit 18 family. As to quaternary structure, component of the Mediator complex.

Its subcellular location is the nucleus. Component of the Mediator complex, a coactivator involved in the regulated transcription of nearly all RNA polymerase II-dependent genes. Mediator functions as a bridge to convey information from gene-specific regulatory proteins to the basal RNA polymerase II transcription machinery. Mediator is recruited to promoters by direct interactions with regulatory proteins and serves as a scaffold for the assembly of a functional preinitiation complex with RNA polymerase II and the general transcription factors. This is Mediator of RNA polymerase II transcription subunit 18 (MED18) from Aedes aegypti (Yellowfever mosquito).